The primary structure comprises 532 residues: Membrane protein insertase YidC (532 aa).

5 helical membrane passes run 7 to 27 (FFIFAFLFVSFLLWQAWQSQM), 336 to 356 (LTILYSIIGNWGFSIILITFI), 413 to 433 (GGFLPIFIQMPIFLSLYYMLI), 450 to 470 (LSSQDPYYVLPVIMGLTMFFI), and 492 to 512 (PVIFTAFFLWFPSGLVLYYII).

It belongs to the OXA1/ALB3/YidC family. Type 1 subfamily. Interacts with the Sec translocase complex via SecD. Specifically interacts with transmembrane segments of nascent integral membrane proteins during membrane integration.

The protein resides in the cell membrane. Its function is as follows. Required for the insertion and/or proper folding and/or complex formation of integral membrane proteins into the membrane. Involved in integration of membrane proteins that insert both dependently and independently of the Sec translocase complex, as well as at least some lipoproteins. Aids folding of multispanning membrane proteins. This Buchnera aphidicola subsp. Acyrthosiphon pisum (strain APS) (Acyrthosiphon pisum symbiotic bacterium) protein is Membrane protein insertase YidC.